We begin with the raw amino-acid sequence, 241 residues long: Proteasome subunit alpha type-5 (241 aa).

The residue at position 1 (Met-1) is an N-acetylmethionine. At Ser-16 the chain carries Phosphoserine. Thr-55 carries the post-translational modification Phosphothreonine. Ser-56 and Ser-63 each carry phosphoserine. An O-linked (GlcNAc) serine glycan is attached at Ser-198.

It belongs to the peptidase T1A family. As to quaternary structure, the 26S proteasome consists of a 20S proteasome core and two 19S regulatory subunits. The 20S proteasome core is a barrel-shaped complex made of 28 subunits that are arranged in four stacked rings. The two outer rings are each formed by seven alpha subunits, and the two inner rings are formed by seven beta subunits. The proteolytic activity is exerted by three beta-subunits PSMB5, PSMB6 and PSMB7. PSMA5 interacts directly with the PSMG1-PSMG2 heterodimer which promotes 20S proteasome assembly.

The protein localises to the cytoplasm. It localises to the nucleus. Component of the 20S core proteasome complex involved in the proteolytic degradation of most intracellular proteins. This complex plays numerous essential roles within the cell by associating with different regulatory particles. Associated with two 19S regulatory particles, forms the 26S proteasome and thus participates in the ATP-dependent degradation of ubiquitinated proteins. The 26S proteasome plays a key role in the maintenance of protein homeostasis by removing misfolded or damaged proteins that could impair cellular functions, and by removing proteins whose functions are no longer required. Associated with the PA200 or PA28, the 20S proteasome mediates ubiquitin-independent protein degradation. This type of proteolysis is required in several pathways including spermatogenesis (20S-PA200 complex) or generation of a subset of MHC class I-presented antigenic peptides (20S-PA28 complex). The polypeptide is Proteasome subunit alpha type-5 (PSMA5) (Bos taurus (Bovine)).